The sequence spans 116 residues: Ribosome-binding factor A (116 aa).

This sequence belongs to the RbfA family. In terms of assembly, monomer. Binds 30S ribosomal subunits, but not 50S ribosomal subunits or 70S ribosomes.

The protein localises to the cytoplasm. Functionally, one of several proteins that assist in the late maturation steps of the functional core of the 30S ribosomal subunit. Associates with free 30S ribosomal subunits (but not with 30S subunits that are part of 70S ribosomes or polysomes). Required for efficient processing of 16S rRNA. May interact with the 5'-terminal helix region of 16S rRNA. This chain is Ribosome-binding factor A, found in Streptococcus equi subsp. zooepidemicus (strain H70).